The sequence spans 499 residues: L-asparagine permease (499 aa).

12 consecutive transmembrane segments (helical) span residues 34 to 54, 58 to 78, 109 to 129, 146 to 166, 171 to 191, 219 to 239, 264 to 284, 298 to 318, 353 to 373, 378 to 398, 422 to 442, and 448 to 468; these read QVQM…GAGA, MAGP…FFIL, VAGW…ITAV, VFAL…VKWF, FWFA…GTVF, LLPA…IEMV, IGLF…WSAY, LGVP…ALSS, YAGI…NYLV, FEIV…FIIV, APFT…LMAF, and TYTI…WFGV.

This sequence belongs to the amino acid-polyamine-organocation (APC) superfamily. Amino acid transporter (AAT) (TC 2.A.3.1) family.

It is found in the cell inner membrane. The sequence is that of L-asparagine permease (ansP) from Escherichia coli (strain K12).